The sequence spans 198 residues: MTSSVHELSDNNESHAKKERPDSQTRPQVPSGRSSESIDTNSVYSEPMAHGLYPYPDPYYRSVFAQQAYLPHPYPGVQLQLMGMQQPGVPLQCDAVEEPVFVNAKQYHGILRRRQSRAKLEARNRAIKAKKPYMHESRHLHAIRRPRGCGGRFLNAKKENGDHKEEEEATSDENTSEASSSLRSEKLAMATSGPNGRS.

Residues 1 to 47 (MTSSVHELSDNNESHAKKERPDSQTRPQVPSGRSSESIDTNSVYSEP) are disordered. Basic and acidic residues predominate over residues 7–23 (ELSDNNESHAKKERPDS). The segment covering 24-44 (QTRPQVPSGRSSESIDTNSVY) has biased composition (polar residues). A Subunit association domain (SAD) motif is present at residues 101–124 (FVNAKQYHGILRRRQSRAKLEARN). Positions 131-156 (KPYMHESRHLHAIRRPRGCGGRFLNA) form a DNA-binding region, NFYA/HAP2-type. The tract at residues 136–198 (ESRHLHAIRR…MATSGPNGRS (63 aa)) is disordered. The segment covering 156–166 (AKKENGDHKEE) has biased composition (basic and acidic residues).

The protein belongs to the NFYA/HAP2 subunit family. As to quaternary structure, heterotrimeric transcription factor composed of three components, NF-YA, NF-YB and NF-YC. NF-YB and NF-YC must interact and dimerize for NF-YA association and DNA binding. Expressed in stems, caulines, and senescent flowers.

It is found in the nucleus. In terms of biological role, stimulates the transcription of various genes by recognizing and binding to a CCAAT motif in promoters. The chain is Nuclear transcription factor Y subunit A-4 (NFYA4) from Arabidopsis thaliana (Mouse-ear cress).